A 247-amino-acid polypeptide reads, in one-letter code: Triosephosphate isomerase (247 aa).

Residue 8-10 (NWK) coordinates substrate. Histidine 94 serves as the catalytic Electrophile. Glutamate 165 (proton acceptor) is an active-site residue. 2 residues coordinate substrate: glycine 171 and serine 210.

The protein belongs to the triosephosphate isomerase family. As to quaternary structure, homodimer.

The protein localises to the cytoplasm. The catalysed reaction is D-glyceraldehyde 3-phosphate = dihydroxyacetone phosphate. It participates in carbohydrate biosynthesis; gluconeogenesis. It functions in the pathway carbohydrate degradation; glycolysis; D-glyceraldehyde 3-phosphate from glycerone phosphate: step 1/1. Involved in the gluconeogenesis. Catalyzes stereospecifically the conversion of dihydroxyacetone phosphate (DHAP) to D-glyceraldehyde-3-phosphate (G3P). The polypeptide is Triosephosphate isomerase (Aquifex aeolicus (strain VF5)).